The following is a 129-amino-acid chain: Lysozyme C (129 aa).

The 129-residue stretch at 1 to 129 (KIYKRCELAA…VSTWIKDCKL (129 aa)) folds into the C-type lysozyme domain. Cystine bridges form between C6–C127, C30–C115, C64–C80, and C76–C94. Active-site residues include E35 and D52.

Belongs to the glycosyl hydrolase 22 family. As to quaternary structure, monomer.

It localises to the secreted. The catalysed reaction is Hydrolysis of (1-&gt;4)-beta-linkages between N-acetylmuramic acid and N-acetyl-D-glucosamine residues in a peptidoglycan and between N-acetyl-D-glucosamine residues in chitodextrins.. Lysozymes have primarily a bacteriolytic function; those in tissues and body fluids are associated with the monocyte-macrophage system and enhance the activity of immunoagents. This Ortalis vetula (Plain chachalaca) protein is Lysozyme C (LYZ).